Here is a 453-residue protein sequence, read N- to C-terminus: Ribulose bisphosphate carboxylase large chain (453 aa).

Residues 1 to 2 constitute a propeptide that is removed on maturation; it reads MS. Proline 3 bears the N-acetylproline mark. N6,N6,N6-trimethyllysine is present on lysine 14. The substrate site is built by asparagine 123 and threonine 173. Lysine 175 (proton acceptor) is an active-site residue. Residue lysine 177 coordinates substrate. Residues lysine 201, aspartate 203, and glutamate 204 each contribute to the Mg(2+) site. Lysine 201 bears the N6-carboxylysine mark. Histidine 294 functions as the Proton acceptor in the catalytic mechanism. Residues arginine 295, histidine 327, and serine 379 each contribute to the substrate site.

It belongs to the RuBisCO large chain family. Type I subfamily. Heterohexadecamer of 8 large chains and 8 small chains; disulfide-linked. The disulfide link is formed within the large subunit homodimers. It depends on Mg(2+) as a cofactor. Post-translationally, the disulfide bond which can form in the large chain dimeric partners within the hexadecamer appears to be associated with oxidative stress and protein turnover.

It localises to the plastid. The protein resides in the chloroplast. The catalysed reaction is 2 (2R)-3-phosphoglycerate + 2 H(+) = D-ribulose 1,5-bisphosphate + CO2 + H2O. It catalyses the reaction D-ribulose 1,5-bisphosphate + O2 = 2-phosphoglycolate + (2R)-3-phosphoglycerate + 2 H(+). Functionally, ruBisCO catalyzes two reactions: the carboxylation of D-ribulose 1,5-bisphosphate, the primary event in carbon dioxide fixation, as well as the oxidative fragmentation of the pentose substrate in the photorespiration process. Both reactions occur simultaneously and in competition at the same active site. The chain is Ribulose bisphosphate carboxylase large chain from Asperula laevigata (Smooth woodruff).